Reading from the N-terminus, the 241-residue chain is Probable transcriptional regulatory protein PSHAb0060 (241 aa).

The protein belongs to the TACO1 family.

It localises to the cytoplasm. The protein is Probable transcriptional regulatory protein PSHAb0060 of Pseudoalteromonas translucida (strain TAC 125).